Reading from the N-terminus, the 270-residue chain is Formamidopyrimidine-DNA glycosylase (270 aa).

Pro2 functions as the Schiff-base intermediate with DNA in the catalytic mechanism. Glu3 serves as the catalytic Proton donor. Catalysis depends on Lys57, which acts as the Proton donor; for beta-elimination activity. The DNA site is built by His90, Arg109, and Lys150. Residues 235–269 (LVYGNKDKPCPRCGTKIKSIIIGQRNSFFCPQCQK) form an FPG-type zinc finger. Arg259 acts as the Proton donor; for delta-elimination activity in catalysis.

It belongs to the FPG family. As to quaternary structure, monomer. It depends on Zn(2+) as a cofactor.

It catalyses the reaction Hydrolysis of DNA containing ring-opened 7-methylguanine residues, releasing 2,6-diamino-4-hydroxy-5-(N-methyl)formamidopyrimidine.. The enzyme catalyses 2'-deoxyribonucleotide-(2'-deoxyribose 5'-phosphate)-2'-deoxyribonucleotide-DNA = a 3'-end 2'-deoxyribonucleotide-(2,3-dehydro-2,3-deoxyribose 5'-phosphate)-DNA + a 5'-end 5'-phospho-2'-deoxyribonucleoside-DNA + H(+). Involved in base excision repair of DNA damaged by oxidation or by mutagenic agents. Acts as a DNA glycosylase that recognizes and removes damaged bases. Has a preference for oxidized purines, such as 7,8-dihydro-8-oxoguanine (8-oxoG). Has AP (apurinic/apyrimidinic) lyase activity and introduces nicks in the DNA strand. Cleaves the DNA backbone by beta-delta elimination to generate a single-strand break at the site of the removed base with both 3'- and 5'-phosphates. The chain is Formamidopyrimidine-DNA glycosylase from Histophilus somni (strain 2336) (Haemophilus somnus).